A 105-amino-acid chain; its full sequence is Molt-inhibiting hormone (105 aa).

The first 28 residues, 1 to 28 (MYRLAMRTWLAIVIVVVGTSLLFDTASA), serve as a signal peptide directing secretion. 3 disulfides stabilise this stretch: cysteine 35–cysteine 72, cysteine 52–cysteine 68, and cysteine 55–cysteine 81.

The protein belongs to the arthropod CHH/MIH/GIH/VIH hormone family. As to expression, produced by the medulla terminalis X-organ in the eyestalks and transported to the sinus gland where it is stored and released.

Its subcellular location is the secreted. Its function is as follows. Inhibits Y-organs where molting hormone (ecdysteroid) is secreted. A molting cycle is initiated when MIH secretion diminishes or stops. Has little or no hyperglycemic activity. This Penaeus japonicus (Kuruma prawn) protein is Molt-inhibiting hormone.